Reading from the N-terminus, the 181-residue chain is Diphosphoinositol polyphosphate phosphohydrolase NUDT4B (181 aa).

Substrate contacts are provided by residues Arg10, 18 to 20, and 39 to 41; these read KKR and SSR. The region spanning 18 to 145 is the Nudix hydrolase domain; that stretch reads KKRAACLCFR…VHAEYLEKLK (128 aa). 2 residues coordinate Mg(2+): Gly50 and Glu66. A Nudix box motif is present at residues 51-72; it reads GGMEPEEEPGGAAVREVYEEAG. Glu69 functions as the Proton acceptor in the catalytic mechanism. Glu70 serves as a coordination point for Mg(2+). Residues 90–92, Arg116, and Lys134 each bind substrate; that span reads RKH.

The protein belongs to the Nudix hydrolase family. DIPP subfamily. Mg(2+) serves as cofactor. Mn(2+) is required as a cofactor.

The protein localises to the cytoplasm. The enzyme catalyses diphospho-myo-inositol polyphosphate + H2O = myo-inositol polyphosphate + phosphate.. Cleaves a beta-phosphate from the diphosphate groups in PP-InsP5 (diphosphoinositol pentakisphosphate), PP-InsP4 and [PP]2-InsP4 (bisdiphosphoinositol tetrakisphosphate), suggesting that it may play a role in signal transduction. Also able to catalyze the hydrolysis of dinucleoside oligophosphate Ap6A, but not Ap5A. The major reaction products are ADP and p4a from Ap6A. Also able to hydrolyze 5-phosphoribose 1-diphosphate. Does not play a role in U8 snoRNA decapping activity. Binds U8 snoRNA. The sequence is that of Diphosphoinositol polyphosphate phosphohydrolase NUDT4B from Homo sapiens (Human).